We begin with the raw amino-acid sequence, 273 residues long: Putative pyruvate, phosphate dikinase regulatory protein (273 aa).

Residue 149-156 (GPSRTSKT) participates in ADP binding.

The protein belongs to the pyruvate, phosphate/water dikinase regulatory protein family. PDRP subfamily.

The catalysed reaction is N(tele)-phospho-L-histidyl/L-threonyl-[pyruvate, phosphate dikinase] + ADP = N(tele)-phospho-L-histidyl/O-phospho-L-threonyl-[pyruvate, phosphate dikinase] + AMP + H(+). It catalyses the reaction N(tele)-phospho-L-histidyl/O-phospho-L-threonyl-[pyruvate, phosphate dikinase] + phosphate + H(+) = N(tele)-phospho-L-histidyl/L-threonyl-[pyruvate, phosphate dikinase] + diphosphate. Bifunctional serine/threonine kinase and phosphorylase involved in the regulation of the pyruvate, phosphate dikinase (PPDK) by catalyzing its phosphorylation/dephosphorylation. This Rickettsia bellii (strain RML369-C) protein is Putative pyruvate, phosphate dikinase regulatory protein.